The chain runs to 138 residues: Small ribosomal subunit protein uS11c (138 aa).

The segment at 1–23 (MAKPILRIGSRKNTRSGSRKNVR) is disordered. Basic residues predominate over residues 9–23 (GSRKNTRSGSRKNVR).

This sequence belongs to the universal ribosomal protein uS11 family. As to quaternary structure, part of the 30S ribosomal subunit.

The protein resides in the plastid. The protein localises to the chloroplast. This chain is Small ribosomal subunit protein uS11c, found in Barbarea verna (Land cress).